A 736-amino-acid chain; its full sequence is Neprilysin-2 (736 aa).

The Cytoplasmic segment spans residues 1–19; the sequence is MRPDEEDGTTKSPGSRWTR. Residues 20 to 40 traverse the membrane as a helical; Signal-anchor for type II membrane protein segment; that stretch reads IWAIIALILLILFLLVLGAAI. The Extracellular segment spans residues 41–736; the sequence is YFYINYKDSS…MNPREKCRVW (696 aa). One can recognise a Peptidase M13 domain in the interval 52–736; that stretch reads VCLSPGCIKT…MNPREKCRVW (685 aa). 5 disulfide bridges follow: Cys-53/Cys-58, Cys-76/Cys-721, Cys-84/Cys-681, Cys-142/Cys-399, and Cys-608/Cys-733. Residues 103-123 are a coiled coil; it reads FENLGQDLEFALKELLDENDE. His-571 provides a ligand contact to Zn(2+). Glu-572 is an active-site residue. 2 residues coordinate Zn(2+): His-575 and Glu-633. The Proton donor role is filled by Asp-637.

This sequence belongs to the peptidase M13 family. Requires Zn(2+) as cofactor. Expressed in muscle cells, GLR cells, SMB motor neurons and AIM interneurons.

It is found in the membrane. Its function is as follows. Required for olfactory plasticity, which is the change from positive chemotaxis to dispersal after prolonged exposure to an odorant. Thought to antagonise snet-1 by degrading excess snet-1 peptides and thus enabling olfactory plasticity. The polypeptide is Neprilysin-2 (Caenorhabditis elegans).